The following is a 377-amino-acid chain: Spermidine/putrescine import ATP-binding protein PotA (377 aa).

One can recognise an ABC transporter domain in the interval 18 to 248; it reads IRLSGISKSF…PKNLFVARFI (231 aa). Residue 50-57 participates in ATP binding; sequence GPSGCGKT.

The protein belongs to the ABC transporter superfamily. Spermidine/putrescine importer (TC 3.A.1.11.1) family. The complex is composed of two ATP-binding proteins (PotA), two transmembrane proteins (PotB and PotC) and a solute-binding protein (PotD).

The protein localises to the cell inner membrane. It carries out the reaction ATP + H2O + polyamine-[polyamine-binding protein]Side 1 = ADP + phosphate + polyamineSide 2 + [polyamine-binding protein]Side 1.. Its function is as follows. Part of the ABC transporter complex PotABCD involved in spermidine/putrescine import. Responsible for energy coupling to the transport system. The protein is Spermidine/putrescine import ATP-binding protein PotA of Vibrio parahaemolyticus serotype O3:K6 (strain RIMD 2210633).